We begin with the raw amino-acid sequence, 551 residues long: Glucans biosynthesis protein D (551 aa).

Residues 1 to 32 (MNRRRFLQGSLAMAALSGTTGLSTLFSRAAFA) constitute a signal peptide (tat-type signal).

It belongs to the OpgD/OpgG family. In terms of processing, predicted to be exported by the Tat system. The position of the signal peptide cleavage has not been experimentally proven.

Its subcellular location is the periplasm. It participates in glycan metabolism; osmoregulated periplasmic glucan (OPG) biosynthesis. In terms of biological role, probably involved in the control of the structural glucose backbone of osmoregulated periplasmic glucans (OPGs). In Enterobacter sp. (strain 638), this protein is Glucans biosynthesis protein D.